Here is a 514-residue protein sequence, read N- to C-terminus: 1-pyrroline-5-carboxylate dehydrogenase (514 aa).

Active-site residues include Glu286 and Cys320.

It belongs to the aldehyde dehydrogenase family. RocA subfamily.

The catalysed reaction is L-glutamate 5-semialdehyde + NAD(+) + H2O = L-glutamate + NADH + 2 H(+). Its pathway is amino-acid degradation; L-proline degradation into L-glutamate; L-glutamate from L-proline: step 2/2. The chain is 1-pyrroline-5-carboxylate dehydrogenase from Staphylococcus aureus (strain MSSA476).